We begin with the raw amino-acid sequence, 355 residues long: uncharacterized protein (355 aa).

A signal peptide spans 1–22 (MRLTHVTACICLLVAVAVLFSG).

The protein belongs to the bacterial solute-binding protein 1 family. WtpA subfamily.

This is an uncharacterized protein from Methanoculleus marisnigri (strain ATCC 35101 / DSM 1498 / JR1).